Here is a 122-residue protein sequence, read N- to C-terminus: Large ribosomal subunit protein uL14 (122 aa).

It belongs to the universal ribosomal protein uL14 family. In terms of assembly, part of the 50S ribosomal subunit. Forms a cluster with proteins L3 and L19. In the 70S ribosome, L14 and L19 interact and together make contacts with the 16S rRNA in bridges B5 and B8.

Binds to 23S rRNA. Forms part of two intersubunit bridges in the 70S ribosome. The polypeptide is Large ribosomal subunit protein uL14 (Pelodictyon phaeoclathratiforme (strain DSM 5477 / BU-1)).